The sequence spans 84 residues: Elongation factor 1-beta (84 aa).

Belongs to the EF-1-beta/EF-1-delta family.

Promotes the exchange of GDP for GTP in EF-1-alpha/GDP, thus allowing the regeneration of EF-1-alpha/GTP that could then be used to form the ternary complex EF-1-alpha/GTP/AAtRNA. The sequence is that of Elongation factor 1-beta from Methanoculleus marisnigri (strain ATCC 35101 / DSM 1498 / JR1).